The primary structure comprises 248 residues: Cytochrome c oxidase subunit 2 (248 aa).

Positions 1–12 are cleaved as a signal peptide; it reads MLLMNLFTIINN. At 13-39 the chain is on the mitochondrial intermembrane side; the sequence is DVPTPYNMYFQDSTTPHQEGILELHDN. Residues 40 to 61 form a helical membrane-spanning segment; sequence IMFYMLTVLGLVSWMMIIIIKD. At 62–79 the chain is on the mitochondrial matrix side; the sequence is YKNNPITYKYIKHGQMIE. A helical transmembrane segment spans residues 80 to 104; that stretch reads IIWTILPAIILLMIAFPSFILLYLC. At 105-248 the chain is on the mitochondrial intermembrane side; sequence DEVISPAMTI…PTFLTWLNEQ (144 aa). Histidine 183, cysteine 218, glutamate 220, cysteine 222, histidine 226, and methionine 229 together coordinate Cu cation. Glutamate 220 provides a ligand contact to Mg(2+).

It belongs to the cytochrome c oxidase subunit 2 family. As to quaternary structure, component of the cytochrome c oxidase (complex IV, CIV), a multisubunit enzyme composed of a catalytic core of 3 subunits and several supernumerary subunits. The complex exists as a monomer or a dimer and forms supercomplexes (SCs) in the inner mitochondrial membrane with ubiquinol-cytochrome c oxidoreductase (cytochrome b-c1 complex, complex III, CIII). Cu cation is required as a cofactor. Post-translationally, the signal sequence of COX2 is processed by IMP1.

It is found in the mitochondrion inner membrane. It catalyses the reaction 4 Fe(II)-[cytochrome c] + O2 + 8 H(+)(in) = 4 Fe(III)-[cytochrome c] + 2 H2O + 4 H(+)(out). Its function is as follows. Component of the cytochrome c oxidase, the last enzyme in the mitochondrial electron transport chain which drives oxidative phosphorylation. The respiratory chain contains 3 multisubunit complexes succinate dehydrogenase (complex II, CII), ubiquinol-cytochrome c oxidoreductase (cytochrome b-c1 complex, complex III, CIII) and cytochrome c oxidase (complex IV, CIV), that cooperate to transfer electrons derived from NADH and succinate to molecular oxygen, creating an electrochemical gradient over the inner membrane that drives transmembrane transport and the ATP synthase. Cytochrome c oxidase is the component of the respiratory chain that catalyzes the reduction of oxygen to water. Electrons originating from reduced cytochrome c in the intermembrane space (IMS) are transferred via the dinuclear copper A center (CU(A)) of subunit 2 and heme A of subunit 1 to the active site in subunit 1, a binuclear center (BNC) formed by heme A3 and copper B (CU(B)). The BNC reduces molecular oxygen to 2 water molecules using 4 electrons from cytochrome c in the IMS and 4 protons from the mitochondrial matrix. This is Cytochrome c oxidase subunit 2 (COX2) from Eremothecium gossypii (strain ATCC 10895 / CBS 109.51 / FGSC 9923 / NRRL Y-1056) (Yeast).